The chain runs to 351 residues: Ion-translocating oxidoreductase complex subunit D (351 aa).

4 consecutive transmembrane segments (helical) span residues 18-38 (IMLL…YFFG), 40-60 (GSLI…GAVL), 87-107 (LPPL…IVIA), and 121-141 (PAMV…TSWL). T185 is modified (FMN phosphoryl threonine). The next 5 helical transmembrane spans lie at 211–231 (VLAG…GLLL), 241–261 (IPVS…MIAP), 264–284 (FASP…FFIA), 298–318 (LIFG…GGYP), and 320–340 (GVAF…HYTQ).

This sequence belongs to the NqrB/RnfD family. In terms of assembly, the complex is composed of six subunits: RnfA, RnfB, RnfC, RnfD, RnfE and RnfG. Requires FMN as cofactor.

It localises to the cell inner membrane. Functionally, part of a membrane-bound complex that couples electron transfer with translocation of ions across the membrane. The sequence is that of Ion-translocating oxidoreductase complex subunit D from Yersinia pseudotuberculosis serotype O:1b (strain IP 31758).